The chain runs to 170 residues: MTIEFDRPGAHVTAADHRALMSLFPTGVAVITAIDEAGTPHGMTCTSLTSVTLDPPTLLVCLNRASGTLHAVRGGRFGVNLLHARGRRAAEVFSTAVQDRFGEVRWEHSDVTGMPWLAEDAHAFAGCVVRKSTVVGDHEIVLGEVHEVVREHDLPLLYGMREFAVWTPEG.

Belongs to the non-flavoprotein flavin reductase family.

The catalysed reaction is reduced riboflavin + NADP(+) = riboflavin + NADPH + 2 H(+). In terms of biological role, catalyzes the NADH-dependent reduction of FAD to provide FADH2 for the halogenase RebH. This is Flavin reductase (NADPH) (rbmH) from Lentzea aerocolonigenes (Lechevalieria aerocolonigenes).